Consider the following 196-residue polypeptide: DNA replication complex GINS protein PSF1 (196 aa).

It belongs to the GINS1/PSF1 family. In terms of assembly, component of the GINS complex which is a heterotetramer of gins1/psf1, gins2/psf2, gins3/psf3 and gins4/sld5. Component of the CMG helicase complex, composed of the mcm2-7 complex, the GINS complex and cdc45.

The protein resides in the nucleus. The protein localises to the chromosome. Functionally, required for correct functioning of the GINS complex, a complex that plays an essential role in the initiation of DNA replication, and progression of DNA replication forks. GINS complex is a core component of CDC45-MCM-GINS (CMG) helicase, the molecular machine that unwinds template DNA during replication, and around which the replisome is built. This is DNA replication complex GINS protein PSF1 from Xenopus laevis (African clawed frog).